The sequence spans 444 residues: 3-isopropylmalate dehydratase large subunit (444 aa).

Positions 348, 408, and 411 each coordinate [4Fe-4S] cluster. The segment at 423–444 (ERXXSHSNRNFEGRQGRGGRTH) is disordered.

The protein belongs to the aconitase/IPM isomerase family. LeuC type 1 subfamily. As to quaternary structure, heterodimer of LeuC and LeuD. [4Fe-4S] cluster is required as a cofactor.

The catalysed reaction is (2R,3S)-3-isopropylmalate = (2S)-2-isopropylmalate. It participates in amino-acid biosynthesis; L-leucine biosynthesis; L-leucine from 3-methyl-2-oxobutanoate: step 2/4. Functionally, catalyzes the isomerization between 2-isopropylmalate and 3-isopropylmalate, via the formation of 2-isopropylmaleate. The sequence is that of 3-isopropylmalate dehydratase large subunit from Buchnera aphidicola subsp. Uroleucon rudbeckiae.